The following is a 432-amino-acid chain: Glutamyl-tRNA reductase (432 aa).

Substrate-binding positions include 55 to 58, S113, 118 to 120, and Q124; these read TCNR and EAQ. The active-site Nucleophile is C56. 193-198 contributes to the NADP(+) binding site; that stretch reads GAGEMI.

It belongs to the glutamyl-tRNA reductase family. In terms of assembly, homodimer.

The enzyme catalyses (S)-4-amino-5-oxopentanoate + tRNA(Glu) + NADP(+) = L-glutamyl-tRNA(Glu) + NADPH + H(+). It functions in the pathway porphyrin-containing compound metabolism; protoporphyrin-IX biosynthesis; 5-aminolevulinate from L-glutamyl-tRNA(Glu): step 1/2. In terms of biological role, catalyzes the NADPH-dependent reduction of glutamyl-tRNA(Glu) to glutamate 1-semialdehyde (GSA). This is Glutamyl-tRNA reductase from Paracidovorax citrulli (strain AAC00-1) (Acidovorax citrulli).